Reading from the N-terminus, the 459-residue chain is Paired box protein Pax-8 (459 aa).

Positions 9–135 (GHGGLNQLGG…SSINRIIRTK (127 aa)) form a DNA-binding region, paired. The tract at residues 12-68 (GLNQLGGAFVNGRPLPEVVRQRIVDLAHQGVRPCDISRQLRVSHGCVSKILGRYYET) is PAI subdomain. Residues 87 to 135 (KVVEKIGDYKRQNPTMFAWEIRDRLLAEGVCDNDTVPSVSSINRIIRTK) are RED subdomain. Residues 159 to 182 (LIPSSAVTPPESPQSDSLGSTYSI) show a composition bias toward polar residues. A disordered region spans residues 159-223 (LIPSSAVTPP…QSSSSGPRKH (65 aa)). Phosphoserine is present on S305.

As to quaternary structure, interacts with WWTR1.

It is found in the nucleus. Its function is as follows. Thought to encode a transcription factor. It may have a role in kidney cell differentiation. May play a regulatory role in mammalian development. In Canis lupus familiaris (Dog), this protein is Paired box protein Pax-8 (PAX8).